Here is a 260-residue protein sequence, read N- to C-terminus: Malonyl-[acyl-carrier protein] O-methyltransferase (260 aa).

It belongs to the methyltransferase superfamily.

The catalysed reaction is malonyl-[ACP] + S-adenosyl-L-methionine = malonyl-[ACP] methyl ester + S-adenosyl-L-homocysteine. The protein operates within cofactor biosynthesis; biotin biosynthesis. Converts the free carboxyl group of a malonyl-thioester to its methyl ester by transfer of a methyl group from S-adenosyl-L-methionine (SAM). It allows to synthesize pimeloyl-ACP via the fatty acid synthetic pathway. The protein is Malonyl-[acyl-carrier protein] O-methyltransferase of Herminiimonas arsenicoxydans.